A 126-amino-acid polypeptide reads, in one-letter code: Histone H2B type 1-P (126 aa).

The interval 1-36 (MPEPVKSVPAPKKGSKKAVTKAQKKDGKKRKRSRKE) is disordered. The residue at position 2 (Pro-2) is an N-acetylproline. Glu-3 is modified (ADP-ribosyl glutamic acid). The residue at position 6 (Lys-6) is an N6-(2-hydroxyisobutyryl)lysine; alternate. Lys-6 carries the post-translational modification N6-(beta-hydroxybutyryl)lysine; alternate. Lys-6 carries the post-translational modification N6-acetyllysine; alternate. Position 6 is an N6-butyryllysine; alternate (Lys-6). N6-crotonyllysine; alternate is present on Lys-6. N6-lactoyllysine; alternate is present on Lys-6. Lys-6 participates in a covalent cross-link: Glycyl lysine isopeptide (Lys-Gly) (interchain with G-Cter in SUMO2); alternate. Residue Ser-7 is modified to ADP-ribosylserine. At Lys-12 the chain carries N6-(beta-hydroxybutyryl)lysine; alternate. An N6-acetyllysine; alternate mark is found at Lys-12 and Lys-13. An N6-crotonyllysine; alternate mark is found at Lys-12 and Lys-13. Residue Lys-12 is modified to N6-lactoyllysine; alternate. The residue at position 13 (Lys-13) is an N6-(2-hydroxyisobutyryl)lysine; alternate. Phosphoserine; by STK4/MST1 is present on Ser-15. 4 positions are modified to N6-acetyllysine; alternate: Lys-16, Lys-17, Lys-21, and Lys-24. N6-crotonyllysine; alternate occurs at positions 16, 17, 21, and 24. Lys-16, Lys-17, Lys-21, and Lys-24 each carry N6-lactoyllysine; alternate. Position 17 is an N6-glutaryllysine; alternate (Lys-17). Lys-21 and Lys-24 each carry N6-(2-hydroxyisobutyryl)lysine; alternate. At Lys-21 the chain carries N6-(beta-hydroxybutyryl)lysine; alternate. An N6-butyryllysine; alternate modification is found at Lys-21. A Glycyl lysine isopeptide (Lys-Gly) (interchain with G-Cter in SUMO2); alternate cross-link involves residue Lys-21. Lys-25 is subject to N6-(2-hydroxyisobutyryl)lysine. Lys-35 is modified (N6-(2-hydroxyisobutyryl)lysine; alternate). Residue Lys-35 is modified to N6-(beta-hydroxybutyryl)lysine; alternate. An N6-crotonyllysine; alternate modification is found at Lys-35. The residue at position 35 (Lys-35) is an N6-glutaryllysine; alternate. At Lys-35 the chain carries N6-succinyllysine; alternate. Residue Lys-35 forms a Glycyl lysine isopeptide (Lys-Gly) (interchain with G-Cter in ubiquitin); alternate linkage. Residue Glu-36 is modified to PolyADP-ribosyl glutamic acid. Ser-37 carries the phosphoserine; by AMPK modification. An N6-(2-hydroxyisobutyryl)lysine; alternate mark is found at Lys-44, Lys-47, and Lys-58. Lys-44 carries the N6-lactoyllysine; alternate modification. An N6-glutaryllysine; alternate mark is found at Lys-44 and Lys-47. Position 47 is an N6-methyllysine; alternate (Lys-47). Position 58 is an N6,N6-dimethyllysine; alternate (Lys-58). At Arg-80 the chain carries Dimethylated arginine. Lys-86 carries the post-translational modification N6-(2-hydroxyisobutyryl)lysine; alternate. Lys-86 carries the N6-acetyllysine; alternate modification. N6-lactoyllysine; alternate is present on Lys-86. Lys-86 bears the N6,N6,N6-trimethyllysine; alternate mark. 2 positions are modified to omega-N-methylarginine: Arg-87 and Arg-93. Lys-109 carries the N6-(2-hydroxyisobutyryl)lysine; alternate modification. Position 109 is an N6-(beta-hydroxybutyryl)lysine; alternate (Lys-109). At Lys-109 the chain carries N6-lactoyllysine; alternate. Position 109 is an N6-glutaryllysine; alternate (Lys-109). Lys-109 carries the post-translational modification N6-methyllysine; alternate. An O-linked (GlcNAc) serine glycan is attached at Ser-113. A Phosphothreonine modification is found at Thr-116. An N6-(2-hydroxyisobutyryl)lysine; alternate mark is found at Lys-117 and Lys-121. Lys-117 is subject to N6-(beta-hydroxybutyryl)lysine; alternate. N6-lactoyllysine; alternate occurs at positions 117 and 121. N6-glutaryllysine; alternate is present on residues Lys-117 and Lys-121. 2 positions are modified to N6-succinyllysine; alternate: Lys-117 and Lys-121. Lys-117 is modified (N6-methylated lysine; alternate). Lys-121 is covalently cross-linked (Glycyl lysine isopeptide (Lys-Gly) (interchain with G-Cter in ubiquitin); alternate).

The protein belongs to the histone H2B family. As to quaternary structure, the nucleosome is a histone octamer containing two molecules each of H2A, H2B, H3 and H4 assembled in one H3-H4 heterotetramer and two H2A-H2B heterodimers. The octamer wraps approximately 147 bp of DNA. Monoubiquitination at Lys-35 (H2BK34Ub) by the MSL1/MSL2 dimer is required for histone H3 'Lys-4' (H3K4me) and 'Lys-79' (H3K79me) methylation and transcription activation at specific gene loci, such as HOXA9 and MEIS1 loci. Similarly, monoubiquitination at Lys-121 (H2BK120Ub) by the RNF20/40 complex gives a specific tag for epigenetic transcriptional activation and is also prerequisite for histone H3 'Lys-4' and 'Lys-79' methylation. It also functions cooperatively with the FACT dimer to stimulate elongation by RNA polymerase II. H2BK120Ub also acts as a regulator of mRNA splicing: deubiquitination by USP49 is required for efficient cotranscriptional splicing of a large set of exons. Post-translationally, phosphorylated on Ser-15 (H2BS14ph) by STK4/MST1 during apoptosis; which facilitates apoptotic chromatin condensation. Also phosphorylated on Ser-15 in response to DNA double strand breaks (DSBs), and in correlation with somatic hypermutation and immunoglobulin class-switch recombination. Phosphorylation at Ser-37 (H2BS36ph) by AMPK in response to stress promotes transcription. In terms of processing, glcNAcylation at Ser-113 promotes monoubiquitination of Lys-121. It fluctuates in response to extracellular glucose, and associates with transcribed genes. ADP-ribosylated by PARP1 or PARP2 on Ser-7 (H2BS6ADPr) in response to DNA damage. H2BS6ADPr promotes recruitment of CHD1L. Mono-ADP-ribosylated on Glu-3 (H2BE2ADPr) by PARP3 in response to single-strand breaks. Poly ADP-ribosylation on Glu-36 (H2BE35ADPr) by PARP1 regulates adipogenesis: it inhibits phosphorylation at Ser-37 (H2BS36ph), thereby blocking expression of pro-adipogenetic genes. Post-translationally, crotonylation (Kcr) is specifically present in male germ cells and marks testis-specific genes in post-meiotic cells, including X-linked genes that escape sex chromosome inactivation in haploid cells. Crotonylation marks active promoters and enhancers and confers resistance to transcriptional repressors. It is also associated with post-meiotically activated genes on autosomes. In terms of processing, hydroxybutyrylation of histones is induced by starvation. Lactylated in macrophages by EP300/P300 by using lactoyl-CoA directly derived from endogenous or exogenous lactate, leading to stimulates gene transcription.

The protein localises to the nucleus. It localises to the chromosome. Its function is as follows. Core component of nucleosome. Nucleosomes wrap and compact DNA into chromatin, limiting DNA accessibility to the cellular machineries which require DNA as a template. Histones thereby play a central role in transcription regulation, DNA repair, DNA replication and chromosomal stability. DNA accessibility is regulated via a complex set of post-translational modifications of histones, also called histone code, and nucleosome remodeling. This is Histone H2B type 1-P (Hist1h2bp) from Mus musculus (Mouse).